The primary structure comprises 239 residues: Ribosomal RNA small subunit methyltransferase G (239 aa).

S-adenosyl-L-methionine is bound by residues G78, F83, 129-130 (AE), and R148.

The protein belongs to the methyltransferase superfamily. RNA methyltransferase RsmG family.

The protein localises to the cytoplasm. Its function is as follows. Specifically methylates the N7 position of a guanine in 16S rRNA. This Clostridium botulinum (strain Alaska E43 / Type E3) protein is Ribosomal RNA small subunit methyltransferase G.